Consider the following 255-residue polypeptide: 4-hydroxy-tetrahydrodipicolinate reductase (255 aa).

NAD(+)-binding positions include 9 to 14 (GFKGKM), 89 to 91 (GTT), and 115 to 118 (APNF). Residue His-145 is the Proton donor/acceptor of the active site. Residue His-146 participates in (S)-2,3,4,5-tetrahydrodipicolinate binding. The Proton donor role is filled by Lys-149. 155–156 (GT) contributes to the (S)-2,3,4,5-tetrahydrodipicolinate binding site.

The protein belongs to the DapB family.

It is found in the cytoplasm. The catalysed reaction is (S)-2,3,4,5-tetrahydrodipicolinate + NAD(+) + H2O = (2S,4S)-4-hydroxy-2,3,4,5-tetrahydrodipicolinate + NADH + H(+). It catalyses the reaction (S)-2,3,4,5-tetrahydrodipicolinate + NADP(+) + H2O = (2S,4S)-4-hydroxy-2,3,4,5-tetrahydrodipicolinate + NADPH + H(+). Its pathway is amino-acid biosynthesis; L-lysine biosynthesis via DAP pathway; (S)-tetrahydrodipicolinate from L-aspartate: step 4/4. Catalyzes the conversion of 4-hydroxy-tetrahydrodipicolinate (HTPA) to tetrahydrodipicolinate. The chain is 4-hydroxy-tetrahydrodipicolinate reductase from Streptococcus gordonii (strain Challis / ATCC 35105 / BCRC 15272 / CH1 / DL1 / V288).